A 502-amino-acid polypeptide reads, in one-letter code: Galactose/methyl galactoside import ATP-binding protein MglA (502 aa).

ABC transporter domains follow at residues 10 to 245 (LEMT…VGRE) and 255 to 502 (NEPK…SRYL). 42 to 49 (GENGAGKS) is an ATP binding site.

Belongs to the ABC transporter superfamily. Galactose/methyl galactoside importer (TC 3.A.1.2.3) family. As to quaternary structure, the complex is composed of one ATP-binding protein (MglA), two transmembrane proteins (MglC) and a solute-binding protein (MglB).

The protein localises to the cell inner membrane. The catalysed reaction is D-galactose(out) + ATP + H2O = D-galactose(in) + ADP + phosphate + H(+). It catalyses the reaction methyl beta-D-galactoside(out) + ATP + H2O = methyl beta-D-galactoside(in) + ADP + phosphate + H(+). Part of the ABC transporter complex MglABC involved in galactose/methyl galactoside import. Responsible for energy coupling to the transport system. This chain is Galactose/methyl galactoside import ATP-binding protein MglA, found in Vibrio cholerae serotype O1 (strain ATCC 39315 / El Tor Inaba N16961).